A 164-amino-acid polypeptide reads, in one-letter code: Protein-export protein SecB (164 aa).

Belongs to the SecB family. As to quaternary structure, homotetramer, a dimer of dimers. One homotetramer interacts with 1 SecA dimer.

The protein localises to the cytoplasm. Functionally, one of the proteins required for the normal export of preproteins out of the cell cytoplasm. It is a molecular chaperone that binds to a subset of precursor proteins, maintaining them in a translocation-competent state. It also specifically binds to its receptor SecA. The polypeptide is Protein-export protein SecB (Ruegeria sp. (strain TM1040) (Silicibacter sp.)).